Here is a 1040-residue protein sequence, read N- to C-terminus: Multidrug resistance protein MdtB (1040 aa).

The next 12 membrane-spanning stretches (helical) occupy residues 16 to 36 (FIMR…AGII), 342 to 362 (DTQF…YLFL), 369 to 389 (IIPG…MVFL), 396 to 416 (LTLM…IVVI), 440 to 460 (IGFT…PLLF), 472 to 492 (FAVT…TLTP), 537 to 557 (WLTL…WVFI), 863 to 883 (LGST…VLGV), 888 to 908 (FIHP…ALLA), 911 to 931 (LAGS…IGIV), 968 to 988 (ILMT…STGV), and 998 to 1018 (IGMV…TPVI).

This sequence belongs to the resistance-nodulation-cell division (RND) (TC 2.A.6) family. MdtB subfamily. As to quaternary structure, part of a tripartite efflux system composed of MdtA, MdtB and MdtC. MdtB forms a heteromultimer with MdtC.

The protein localises to the cell inner membrane. This Klebsiella pneumoniae subsp. pneumoniae (strain ATCC 700721 / MGH 78578) protein is Multidrug resistance protein MdtB.